The following is a 184-amino-acid chain: Photosystem I assembly protein Ycf4 (184 aa).

2 helical membrane-spanning segments follow: residues 19–39 (LSNF…LLVG) and 57–77 (FIFF…LFIS).

The protein belongs to the Ycf4 family.

It is found in the plastid. It localises to the chloroplast thylakoid membrane. Its function is as follows. Seems to be required for the assembly of the photosystem I complex. This Jasminum nudiflorum (Winter jasmine) protein is Photosystem I assembly protein Ycf4.